The sequence spans 1043 residues: Isoleucine--tRNA ligase (1043 aa).

Positions 49–59 (PFATGLPHYGH) match the 'HIGH' region motif. The short motif at 592–596 (KMSKR) is the 'KMSKS' region element. Position 595 (K595) interacts with ATP.

The protein belongs to the class-I aminoacyl-tRNA synthetase family. IleS type 2 subfamily. In terms of assembly, monomer. Requires Zn(2+) as cofactor.

Its subcellular location is the cytoplasm. The catalysed reaction is tRNA(Ile) + L-isoleucine + ATP = L-isoleucyl-tRNA(Ile) + AMP + diphosphate. Its function is as follows. Catalyzes the attachment of isoleucine to tRNA(Ile). As IleRS can inadvertently accommodate and process structurally similar amino acids such as valine, to avoid such errors it has two additional distinct tRNA(Ile)-dependent editing activities. One activity is designated as 'pretransfer' editing and involves the hydrolysis of activated Val-AMP. The other activity is designated 'posttransfer' editing and involves deacylation of mischarged Val-tRNA(Ile). This Chlamydia caviae (strain ATCC VR-813 / DSM 19441 / 03DC25 / GPIC) (Chlamydophila caviae) protein is Isoleucine--tRNA ligase.